A 368-amino-acid chain; its full sequence is Agmatine deiminase (368 aa).

Cys-357 serves as the catalytic Amidino-cysteine intermediate.

This sequence belongs to the agmatine deiminase family. In terms of assembly, homodimer.

It catalyses the reaction agmatine + H2O = N-carbamoylputrescine + NH4(+). It functions in the pathway amine and polyamine biosynthesis; putrescine biosynthesis via agmatine pathway; N-carbamoylputrescine from agmatine: step 1/1. Mediates the hydrolysis of agmatine into N-carbamoylputrescine in the arginine decarboxylase (ADC) pathway of putrescine biosynthesis, a basic polyamine. This chain is Agmatine deiminase, found in Stutzerimonas stutzeri (strain A1501) (Pseudomonas stutzeri).